Consider the following 181-residue polypeptide: Iron sulfur cluster assembly protein 1, mitochondrial (181 aa).

The interval 159–181 (RKTKNPTLGAEAAETPAAATATA) is disordered. The span at 168–181 (AEAAETPAAATATA) shows a compositional bias: low complexity.

Belongs to the NifU family. Component of the core Fe-S cluster (ISC) assembly machinery. [2Fe-2S] cluster is required as a cofactor.

The protein localises to the mitochondrion matrix. It functions in the pathway cofactor biosynthesis; iron-sulfur cluster biosynthesis. Functionally, scaffold protein for the de novo synthesis of iron-sulfur (Fe-S) clusters within mitochondria, which is required for maturation of both mitochondrial and cytoplasmic [2Fe-2S] and [4Fe-4S] proteins. First, a [2Fe-2S] cluster is transiently assembled on the scaffold protein ISU1. In a second step, the cluster is released from ISU1, transferred to a glutaredoxin, followed by the formation of mitochondrial [2Fe-2S] proteins, the synthesis of [4Fe-4S] clusters and their target-specific insertion into the recipient apoproteins. Cluster assembly on ISU1 depends on the function of the cysteine desulfurase complex NFS1-ISD11, which serves as the sulfur donor for cluster synthesis, the iron-binding protein frataxin as the putative iron donor, and the electron transfer chain comprised of ferredoxin reductase and ferredoxin, which receive their electrons from NADH. The sequence is that of Iron sulfur cluster assembly protein 1, mitochondrial (ISU1) from Yarrowia lipolytica (strain CLIB 122 / E 150) (Yeast).